The sequence spans 189 residues: UPF0301 protein RF_0044 (189 aa).

The protein belongs to the UPF0301 (AlgH) family.

The polypeptide is UPF0301 protein RF_0044 (Rickettsia felis (strain ATCC VR-1525 / URRWXCal2) (Rickettsia azadi)).